We begin with the raw amino-acid sequence, 518 residues long: Arginyl-tRNA--protein transferase 1 (518 aa).

The segment covering 149–165 (ESLQSEGKNSKKEEPHE) has biased composition (basic and acidic residues). The interval 149-207 (ESLQSEGKNSKKEEPHELLQSQDSVGEKLGSGEPSHSVKVHTVPKPGKGADLSKPPCRK) is disordered. At Ser169 the chain carries Phosphoserine.

The protein belongs to the R-transferase family. In terms of assembly, monomer. Interacts with LIAT1; LIAT1 is not a substrate of ATE1, the interaction takes place in the cytoplasm and seems to increase ATE1 arginyltransferase activity.

Its subcellular location is the nucleus. It is found in the cytoplasm. The enzyme catalyses an N-terminal L-alpha-aminoacyl-[protein] + L-arginyl-tRNA(Arg) = an N-terminal L-arginyl-L-aminoacyl-[protein] + tRNA(Arg) + H(+). Its function is as follows. Involved in the post-translational conjugation of arginine to the N-terminal aspartate or glutamate of a protein. This arginylation is required for degradation of the protein via the ubiquitin pathway. Does not arginylate cysteine residues. In Macaca fascicularis (Crab-eating macaque), this protein is Arginyl-tRNA--protein transferase 1 (ATE1).